We begin with the raw amino-acid sequence, 548 residues long: Biotin-dependent acetyl-/propionyl-coenzyme A carboxylase beta5 subunit (548 aa).

The disordered stretch occupies residues 1–23 (MTSVTDRSAHSAERSTEHTIDIH). Basic and acidic residues predominate over residues 7 to 21 (RSAHSAERSTEHTID). Residues 25 to 281 (TAGKLAELHK…NNSTDAPRYQ (257 aa)) enclose the CoA carboxyltransferase N-terminal domain. The CoA carboxyltransferase C-terminal domain occupies 295 to 541 (DEDLELDTLI…ERKIAQLPPK (247 aa)).

This sequence belongs to the AccD/PCCB family. As to quaternary structure, forms homohexamers. The biotin-dependent acyl-CoA carboxylase complex is composed of AccA3, which contains the biotin carboxylase (BC) and biotin carboxyl carrier protein (BCCP) domains, and AccD5, which contains the carboxyl transferase (CT) domain. The AccA3/AccD5 complex forms a dodecamer, and can associate with the epsilon subunit AccE5 (Rv3280), which stimulates carboxylation by the complex. Is also part of the long-chain acyl-CoA carboxylase (LCC) complex, which is composed of AccA3, AccD4, AccD5 and AccE5. The four subunits are essential for activity, but AccD5, together with AccE5, probably plays a structural role rather than a catalytic one.

The enzyme catalyses N(6)-carboxybiotinyl-L-lysyl-[protein] + acetyl-CoA = N(6)-biotinyl-L-lysyl-[protein] + malonyl-CoA. The catalysed reaction is N(6)-carboxybiotinyl-L-lysyl-[protein] + propanoyl-CoA = methylmalonyl-CoA + N(6)-biotinyl-L-lysyl-[protein]. It functions in the pathway lipid metabolism; mycolic acid biosynthesis. Carboxylase activity of the AccA3/AccD5 complex is stimulated by interaction with AccE5. Its function is as follows. Component of a biotin-dependent acyl-CoA carboxylase complex. This subunit transfers the CO2 from carboxybiotin to the CoA ester substrate. When associated with the alpha3 subunit AccA3, is involved in the carboxylation of acetyl-CoA and propionyl-CoA, with a preference for propionyl-CoA. Is also required for the activity of the long-chain acyl-CoA carboxylase (LCC) complex. This is Biotin-dependent acetyl-/propionyl-coenzyme A carboxylase beta5 subunit from Mycobacterium tuberculosis (strain ATCC 25618 / H37Rv).